Here is an 86-residue protein sequence, read N- to C-terminus: UPF0291 protein LBA1279 (86 aa).

Basic and acidic residues-rich tracts occupy residues 1–27 and 65–75; these read MNKD…KENE and NGKEVTSEKAK. Disordered regions lie at residues 1–36 and 65–86; these read MNKD…EEEE and NGKE…LRKD. The segment covering 76–86 has biased composition (basic residues); that stretch reads QAQRKKGLRKD.

Belongs to the UPF0291 family.

The protein localises to the cytoplasm. The chain is UPF0291 protein LBA1279 from Lactobacillus acidophilus (strain ATCC 700396 / NCK56 / N2 / NCFM).